The following is a 512-amino-acid chain: Rab11 family-interacting protein 2 (512 aa).

The C2 domain maps to 1-120; it reads MMLSEQAQKW…DKQRRKTEWF (120 aa). Residues 15–102 form a necessary for its cellular translocation to the plasma membrane region; the sequence is VQVTVLQAKD…GLDKFLGQVA (88 aa). 2 disordered regions span residues 174–231 and 263–287; these read RKSD…MSDL and PESG…NQPG. Polar residues-rich tracts occupy residues 221–231 and 277–287; these read RLSSAHSMSDL and SFDTSKLNQPG. Ser-227 is modified (phosphoserine; by MARK2). Ser-277 is subject to Phosphoserine. Residues 323–325 carry the NPF 1 motif; that stretch reads NPF. Positions 347 to 374 are enriched in basic and acidic residues; it reads KESKREKREKVSLFERVTGKRDSRRPDK. Positions 347 to 390 are disordered; it reads KESKREKREKVSLFERVTGKRDSRRPDKLNNGGSDSPCDLKSPS. Short sequence motifs (NPF) lie at residues 406–408 and 440–442; these read NPF. One can recognise an FIP-RBD domain in the interval 437–499; sequence PDNNPFDATA…EETPSILRVP (63 aa). The necessary for interaction with AP2A1, RAB11A, subcellular location, endocytosis activity and homooligomerization stretch occupies residues 465 to 512; the sequence is ELLRRKDTHIRELEDYIDNLLVRVMEETPSILRVPYEPSRKAGKFTNS.

As to quaternary structure, homooligomerizes in a Rab11-independent manner. Forms a heterooligomeric complex with RAB11FIP4. Interacts with AP2A1, MYO5B, RAB25 and REPS1. Interacts with RAB11A and RAB11B (activated GTP-bound form). Interacts with NPC1L1. Interacts (via NPF motifs) with EHD1 and EHD3. Interacts with TICAM2; this interaction directs RAB11FIP2 to the phagosome. Interacts with RAB14 and RAB25 (GTP-bound forms). In terms of processing, phosphorylation at Ser-227 by MARK2 regulates epithelial cell polarity.

The protein localises to the cell membrane. It is found in the recycling endosome membrane. Its function is as follows. A Rab11 effector binding preferentially phosphatidylinositol 3,4,5-trisphosphate (PtdInsP3) and phosphatidic acid (PA) and acting in the regulation of the transport of vesicles from the endosomal recycling compartment (ERC) to the plasma membrane. Involved in insulin granule exocytosis. Also involved in receptor-mediated endocytosis and membrane trafficking of recycling endosomes, probably originating from clathrin-coated vesicles. Required in a complex with MYO5B and RAB11 for the transport of NPC1L1 to the plasma membrane. Also acts as a regulator of cell polarity. Plays an essential role in phagocytosis through a mechanism involving TICAM2, RAC1 and CDC42 Rho GTPases for controlling actin-dynamics. In Mus musculus (Mouse), this protein is Rab11 family-interacting protein 2 (Rab11fip2).